The primary structure comprises 1138 residues: Tyrosine-protein kinase receptor Tie-1 (1138 aa).

Positions 1 to 21 are cleaved as a signal peptide; that stretch reads MVWRVPPFLLPILFLASHVGA. The Extracellular segment spans residues 22–759; the sequence is AVDLTLLANL…SRAAEEGLDQ (738 aa). Residues 43-105 form the Ig-like C2-type 1 domain; it reads CVSGEAGAGR…PSDLVGVFSC (63 aa). Residues asparagine 83 and asparagine 161 are each glycosylated (N-linked (GlcNAc...) asparagine). 3 EGF-like domains span residues 214 to 256, 258 to 303, and 305 to 345; these read GCGA…TRCE, ACRE…SQCQ, and ACAP…VHCE. Disulfide bonds link cysteine 228/cysteine 237, cysteine 231/cysteine 244, and cysteine 246/cysteine 255. Disulfide bonds link cysteine 315-cysteine 327, cysteine 321-cysteine 333, and cysteine 335-cysteine 344. The 55-residue stretch at 372-426 folds into the Ig-like C2-type 2 domain; that stretch reads CAAAGNPFPVRGSIELRKPDGTVLLSTKAIVEPEKTTAEFEVPRLVLADSGFWEC. Fibronectin type-III domains lie at 446–545, 548–642, and 646–739; these read PPVP…CPEP, QPWL…LPPS, and APRH…TLGN. N-linked (GlcNAc...) asparagine glycans are attached at residues asparagine 503, asparagine 596, and asparagine 709. A helical transmembrane segment spans residues 760–784; the sequence is QLILAVVGSVSATCLTILAALLTLV. Residues 785–1138 are Cytoplasmic-facing; the sequence is CIRRSCLHRR…AGIDATAEEA (354 aa). Positions 839–1118 constitute a Protein kinase domain; that stretch reads ITFEDLIGEG…RMLEARKAYV (280 aa). ATP-binding positions include 845-853 and lysine 870; that span reads IGEGNFGQV. Aspartate 979 (proton acceptor) is an active-site residue. Residue tyrosine 1007 is modified to Phosphotyrosine; by autocatalysis.

This sequence belongs to the protein kinase superfamily. Tyr protein kinase family. Tie subfamily. In terms of assembly, heterodimer with TEK/TIE2. Interacts with SVEP1 (via C-terminus). In terms of processing, phosphorylated on tyrosine residues in response to ANGPT1, most likely by TEK/TIE2. Specifically expressed in developing vascular endothelial cells.

Its subcellular location is the cell membrane. It catalyses the reaction L-tyrosyl-[protein] + ATP = O-phospho-L-tyrosyl-[protein] + ADP + H(+). Functionally, transmembrane tyrosine-protein kinase that may modulate TEK/TIE2 activity and contribute to the regulation of angiogenesis. The polypeptide is Tyrosine-protein kinase receptor Tie-1 (TIE1) (Homo sapiens (Human)).